Reading from the N-terminus, the 491-residue chain is Ketol-acid reductoisomerase (NADP(+)) (491 aa).

Positions 15–208 constitute a KARI N-terminal Rossmann domain; that stretch reads AQLGKCRFMG…GGHRAGVLES (194 aa). Residues 45–48, Arg-68, Arg-76, Ser-78, and 108–110 each bind NADP(+); these read CGAQ and DKQ. His-132 is a catalytic residue. Gly-158 lines the NADP(+) pocket. KARI C-terminal knotted domains follow at residues 209–344 and 345–484; these read SFVA…TAPQ and YEGK…MTDM. Residues Asp-217, Glu-221, Glu-389, and Glu-393 each contribute to the Mg(2+) site. Residue Ser-414 coordinates substrate.

The protein belongs to the ketol-acid reductoisomerase family. The cofactor is Mg(2+).

It carries out the reaction (2R)-2,3-dihydroxy-3-methylbutanoate + NADP(+) = (2S)-2-acetolactate + NADPH + H(+). The catalysed reaction is (2R,3R)-2,3-dihydroxy-3-methylpentanoate + NADP(+) = (S)-2-ethyl-2-hydroxy-3-oxobutanoate + NADPH + H(+). The protein operates within amino-acid biosynthesis; L-isoleucine biosynthesis; L-isoleucine from 2-oxobutanoate: step 2/4. It participates in amino-acid biosynthesis; L-valine biosynthesis; L-valine from pyruvate: step 2/4. Involved in the biosynthesis of branched-chain amino acids (BCAA). Catalyzes an alkyl-migration followed by a ketol-acid reduction of (S)-2-acetolactate (S2AL) to yield (R)-2,3-dihydroxy-isovalerate. In the isomerase reaction, S2AL is rearranged via a Mg-dependent methyl migration to produce 3-hydroxy-3-methyl-2-ketobutyrate (HMKB). In the reductase reaction, this 2-ketoacid undergoes a metal-dependent reduction by NADPH to yield (R)-2,3-dihydroxy-isovalerate. The sequence is that of Ketol-acid reductoisomerase (NADP(+)) from Escherichia coli O8 (strain IAI1).